Consider the following 441-residue polypeptide: Protein eva-1 homolog C (441 aa).

The interval 1–23 (MLLPGPARQPPTPQPVQHPGLRR) is disordered. The first 48 residues, 1–48 (MLLPGPARQPPTPQPVQHPGLRRQVEPPGQLLRLFYCTVLVCSKEISA), serve as a signal peptide directing secretion. The span at 7–16 (ARQPPTPQPV) shows a compositional bias: pro residues. Residues 49 to 322 (LTDFSGYLTK…AYIRAHPERA (274 aa)) lie on the Extracellular side of the membrane. Asn-62 carries an N-linked (GlcNAc...) asparagine glycan. One can recognise an SUEL-type lectin 1 domain in the interval 67 to 159 (ACDGDYLNLQ…KYLLVSFKCQ (93 aa)). N-linked (GlcNAc...) asparagine glycosylation occurs at Asn-165. One can recognise an SUEL-type lectin 2 domain in the interval 168-260 (VCEDQELKLH…KYLTVTYACV (93 aa)). Residues 323–343 (ALLFVSSVCIGLALTLCALVI) traverse the membrane as a helical segment. Residues 344-441 (RESCAKDFRD…SLPRNMGQFY (98 aa)) are Cytoplasmic-facing. Positions 362-391 (VPGSDKVEEDSEDEEEEEDSSESDFPGELS) are disordered. Residues 368–383 (VEEDSEDEEEEEDSSE) show a composition bias toward acidic residues.

It belongs to the EVA1 family.

It localises to the cell membrane. Its function is as follows. Binds heparin. This chain is Protein eva-1 homolog C (EVA1C), found in Pan troglodytes (Chimpanzee).